The following is an 85-amino-acid chain: Large ribosomal subunit protein bL27 (85 aa).

The segment at 1–22 (MAHKKAGGSTNNGRDSESKRLG) is disordered.

It belongs to the bacterial ribosomal protein bL27 family.

This chain is Large ribosomal subunit protein bL27, found in Photobacterium profundum (strain SS9).